Here is a 457-residue protein sequence, read N- to C-terminus: Siroheme synthase (457 aa).

A precorrin-2 dehydrogenase /sirohydrochlorin ferrochelatase region spans residues 1–204; that stretch reads MDHLPIFCQL…NDQKAITETT (204 aa). NAD(+) is bound by residues 22-23 and 43-44; these read DV and LA. Serine 128 carries the post-translational modification Phosphoserine. Residues 216 to 457 form a uroporphyrinogen-III C-methyltransferase region; sequence GEVVLVGAGP…RDKLNWFSNH (242 aa). Proline 225 is a binding site for S-adenosyl-L-methionine. The active-site Proton acceptor is the aspartate 248. Lysine 270 (proton donor) is an active-site residue. S-adenosyl-L-methionine contacts are provided by residues 301–303, isoleucine 306, 331–332, methionine 382, and glycine 411; these read GGD and TA.

It in the N-terminal section; belongs to the precorrin-2 dehydrogenase / sirohydrochlorin ferrochelatase family. The protein in the C-terminal section; belongs to the precorrin methyltransferase family.

It catalyses the reaction uroporphyrinogen III + 2 S-adenosyl-L-methionine = precorrin-2 + 2 S-adenosyl-L-homocysteine + H(+). It carries out the reaction precorrin-2 + NAD(+) = sirohydrochlorin + NADH + 2 H(+). The catalysed reaction is siroheme + 2 H(+) = sirohydrochlorin + Fe(2+). It participates in cofactor biosynthesis; adenosylcobalamin biosynthesis; precorrin-2 from uroporphyrinogen III: step 1/1. It functions in the pathway cofactor biosynthesis; adenosylcobalamin biosynthesis; sirohydrochlorin from precorrin-2: step 1/1. The protein operates within porphyrin-containing compound metabolism; siroheme biosynthesis; precorrin-2 from uroporphyrinogen III: step 1/1. Its pathway is porphyrin-containing compound metabolism; siroheme biosynthesis; siroheme from sirohydrochlorin: step 1/1. It participates in porphyrin-containing compound metabolism; siroheme biosynthesis; sirohydrochlorin from precorrin-2: step 1/1. In terms of biological role, multifunctional enzyme that catalyzes the SAM-dependent methylations of uroporphyrinogen III at position C-2 and C-7 to form precorrin-2 via precorrin-1. Then it catalyzes the NAD-dependent ring dehydrogenation of precorrin-2 to yield sirohydrochlorin. Finally, it catalyzes the ferrochelation of sirohydrochlorin to yield siroheme. The sequence is that of Siroheme synthase from Escherichia fergusonii (strain ATCC 35469 / DSM 13698 / CCUG 18766 / IAM 14443 / JCM 21226 / LMG 7866 / NBRC 102419 / NCTC 12128 / CDC 0568-73).